We begin with the raw amino-acid sequence, 505 residues long: Histidine ammonia-lyase (505 aa).

Positions 141-143 (ASG) form a cross-link, 5-imidazolinone (Ala-Gly). 2,3-didehydroalanine (Ser) is present on serine 142.

The protein belongs to the PAL/histidase family. Contains an active site 4-methylidene-imidazol-5-one (MIO), which is formed autocatalytically by cyclization and dehydration of residues Ala-Ser-Gly.

The protein localises to the cytoplasm. The enzyme catalyses L-histidine = trans-urocanate + NH4(+). It participates in amino-acid degradation; L-histidine degradation into L-glutamate; N-formimidoyl-L-glutamate from L-histidine: step 1/3. The sequence is that of Histidine ammonia-lyase from Bacillus thuringiensis subsp. konkukian (strain 97-27).